Consider the following 148-residue polypeptide: Large ribosomal subunit protein bL9 (148 aa).

This sequence belongs to the bacterial ribosomal protein bL9 family.

Functionally, binds to the 23S rRNA. In Bifidobacterium adolescentis (strain ATCC 15703 / DSM 20083 / NCTC 11814 / E194a), this protein is Large ribosomal subunit protein bL9.